The following is a 398-amino-acid chain: Cytochrome b (398 aa).

The chain crosses the membrane as a helical span at residues 45-65; the sequence is LGSIAGIALVIQIITGVILAM. Heme b contacts are provided by His-95 and His-109. Transmembrane regions (helical) follow at residues 97-117, 129-149, 164-184, 192-212, 245-265, 304-324, 335-355, and 364-384; these read VGAS…LYYG, IGII…VLPW, FSAI…GFSV, FFSL…LHLL, FVGF…EPNY, LAGV…PWLD, PIYR…GYLG, and IIIS…VLPL. Heme b is bound by residues His-196 and His-210.

The protein belongs to the cytochrome b family. In terms of assembly, the main subunits of complex b-c1 are: cytochrome b, cytochrome c1 and the Rieske protein. It depends on heme b as a cofactor.

The protein localises to the cell membrane. In terms of biological role, component of the ubiquinol-cytochrome c reductase complex (complex III or cytochrome b-c1 complex), which is a respiratory chain that generates an electrochemical potential coupled to ATP synthesis. This Rickettsia typhi (strain ATCC VR-144 / Wilmington) protein is Cytochrome b (petB).